Reading from the N-terminus, the 233-residue chain is Hydroxyacylglutathione hydrolase (233 aa).

Zn(2+) contacts are provided by His52, His54, Asp56, His57, His108, Asp125, and His163.

The protein belongs to the metallo-beta-lactamase superfamily. Glyoxalase II family. In terms of assembly, monomer. Requires Zn(2+) as cofactor.

It carries out the reaction an S-(2-hydroxyacyl)glutathione + H2O = a 2-hydroxy carboxylate + glutathione + H(+). The protein operates within secondary metabolite metabolism; methylglyoxal degradation; (R)-lactate from methylglyoxal: step 2/2. Functionally, thiolesterase that catalyzes the hydrolysis of S-D-lactoyl-glutathione to form glutathione and D-lactic acid. The protein is Hydroxyacylglutathione hydrolase of Histophilus somni (strain 2336) (Haemophilus somnus).